Reading from the N-terminus, the 384-residue chain is S-adenosylmethionine synthase (384 aa).

Histidine 15 is a binding site for ATP. Mg(2+) is bound at residue aspartate 17. Glutamate 43 is a K(+) binding site. Glutamate 56 and glutamine 99 together coordinate L-methionine. Residues 99–109 form a flexible loop region; the sequence is QSADINQGVDR. ATP is bound by residues 164-166, 230-231, aspartate 239, 245-246, alanine 262, and lysine 266; these read DAK, RF, and RK. Residue aspartate 239 participates in L-methionine binding. Lysine 270 is a binding site for L-methionine.

It belongs to the AdoMet synthase family. In terms of assembly, homotetramer; dimer of dimers. It depends on Mg(2+) as a cofactor. K(+) serves as cofactor.

The protein resides in the cytoplasm. The catalysed reaction is L-methionine + ATP + H2O = S-adenosyl-L-methionine + phosphate + diphosphate. Its pathway is amino-acid biosynthesis; S-adenosyl-L-methionine biosynthesis; S-adenosyl-L-methionine from L-methionine: step 1/1. Functionally, catalyzes the formation of S-adenosylmethionine (AdoMet) from methionine and ATP. The overall synthetic reaction is composed of two sequential steps, AdoMet formation and the subsequent tripolyphosphate hydrolysis which occurs prior to release of AdoMet from the enzyme. The sequence is that of S-adenosylmethionine synthase from Haemophilus influenzae (strain PittEE).